The primary structure comprises 505 residues: Trans-cinnamate 4-monooxygenase (505 aa).

A helical membrane pass occupies residues 3-23; it reads LLLLEKTLLGLFLAAVVAIVV. Residues 213–218 and Ala-306 each bind (E)-cinnamate; that span reads RSRLAQ. Residue Cys-447 coordinates heme.

The protein belongs to the cytochrome P450 family. Heme serves as cofactor.

It is found in the membrane. The catalysed reaction is (E)-cinnamate + reduced [NADPH--hemoprotein reductase] + O2 = (E)-4-coumarate + oxidized [NADPH--hemoprotein reductase] + H2O + H(+). Its pathway is phenylpropanoid metabolism; trans-4-coumarate biosynthesis; trans-4-coumarate from trans-cinnamate: step 1/1. Its function is as follows. Catalyzes the first oxidative step of the phenylpropanoid pathway in higher plants by transforming trans-cinnamate into p-coumarate. The compounds formed by this pathway are essential components for lignification, pollination, and defense against ultraviolet light, predators and pathogens. This is Trans-cinnamate 4-monooxygenase (CYP73A2) from Vigna radiata var. radiata (Mung bean).